A 117-amino-acid chain; its full sequence is Large ribosomal subunit protein uL18 (117 aa).

The protein belongs to the universal ribosomal protein uL18 family. As to quaternary structure, part of the 50S ribosomal subunit; part of the 5S rRNA/L5/L18/L25 subcomplex. Contacts the 5S and 23S rRNAs.

Functionally, this is one of the proteins that bind and probably mediate the attachment of the 5S RNA into the large ribosomal subunit, where it forms part of the central protuberance. The polypeptide is Large ribosomal subunit protein uL18 (Halorhodospira halophila (strain DSM 244 / SL1) (Ectothiorhodospira halophila (strain DSM 244 / SL1))).